A 608-amino-acid polypeptide reads, in one-letter code: UvrABC system protein C (608 aa).

A GIY-YIG domain is found at 13–91 (HDPGVYRMFD…IKTFQPRYNV (79 aa)). A UVR domain is found at 201-236 (QQVLDHLIGKMERASRALNFEEAARYRDQIQAVRSV).

It belongs to the UvrC family. In terms of assembly, interacts with UvrB in an incision complex.

The protein localises to the cytoplasm. The UvrABC repair system catalyzes the recognition and processing of DNA lesions. UvrC both incises the 5' and 3' sides of the lesion. The N-terminal half is responsible for the 3' incision and the C-terminal half is responsible for the 5' incision. The chain is UvrABC system protein C from Mannheimia succiniciproducens (strain KCTC 0769BP / MBEL55E).